A 513-amino-acid polypeptide reads, in one-letter code: GMP synthase [glutamine-hydrolyzing] (513 aa).

The region spanning 7–198 (LIVVVDFGGQ…LFNIAGCRGD (192 aa)) is the Glutamine amidotransferase type-1 domain. Cys84 functions as the Nucleophile in the catalytic mechanism. Catalysis depends on residues His172 and Glu174. The GMPS ATP-PPase domain maps to 199-388 (WTTESFITRQ…LGVPEEIVGR (190 aa)). An ATP-binding site is contributed by 226 to 232 (SGGVDSS).

Homodimer.

The catalysed reaction is XMP + L-glutamine + ATP + H2O = GMP + L-glutamate + AMP + diphosphate + 2 H(+). The protein operates within purine metabolism; GMP biosynthesis; GMP from XMP (L-Gln route): step 1/1. Catalyzes the synthesis of GMP from XMP. The sequence is that of GMP synthase [glutamine-hydrolyzing] from Symbiobacterium thermophilum (strain DSM 24528 / JCM 14929 / IAM 14863 / T).